We begin with the raw amino-acid sequence, 60 residues long: Large ribosomal subunit protein uL30 (60 aa).

Belongs to the universal ribosomal protein uL30 family. As to quaternary structure, part of the 50S ribosomal subunit.

The chain is Large ribosomal subunit protein uL30 from Streptomyces avermitilis (strain ATCC 31267 / DSM 46492 / JCM 5070 / NBRC 14893 / NCIMB 12804 / NRRL 8165 / MA-4680).